A 467-amino-acid chain; its full sequence is Fumarate hydratase class II (467 aa).

Substrate is bound by residues 99–101 (SGT), 130–133 (HPND), 140–142 (SSN), and Thr188. The Proton donor/acceptor role is filled by His189. Ser319 is a catalytic residue. Substrate contacts are provided by residues Ser320 and 325-327 (KVN).

Belongs to the class-II fumarase/aspartase family. Fumarase subfamily. In terms of assembly, homotetramer.

The protein resides in the cytoplasm. The enzyme catalyses (S)-malate = fumarate + H2O. The protein operates within carbohydrate metabolism; tricarboxylic acid cycle; (S)-malate from fumarate: step 1/1. Functionally, involved in the TCA cycle. Catalyzes the stereospecific interconversion of fumarate to L-malate. This is Fumarate hydratase class II from Thermosynechococcus vestitus (strain NIES-2133 / IAM M-273 / BP-1).